The following is a 341-amino-acid chain: tRNA N6-adenosine threonylcarbamoyltransferase (341 aa).

Residues histidine 114 and histidine 118 each contribute to the Fe cation site. Residues 136–140, aspartate 170, glycine 183, aspartate 187, and asparagine 275 contribute to the substrate site; that span reads LVSGG. Aspartate 303 provides a ligand contact to Fe cation.

The protein belongs to the KAE1 / TsaD family. Requires Fe(2+) as cofactor.

It localises to the cytoplasm. The enzyme catalyses L-threonylcarbamoyladenylate + adenosine(37) in tRNA = N(6)-L-threonylcarbamoyladenosine(37) in tRNA + AMP + H(+). In terms of biological role, required for the formation of a threonylcarbamoyl group on adenosine at position 37 (t(6)A37) in tRNAs that read codons beginning with adenine. Is involved in the transfer of the threonylcarbamoyl moiety of threonylcarbamoyl-AMP (TC-AMP) to the N6 group of A37, together with TsaE and TsaB. TsaD likely plays a direct catalytic role in this reaction. The protein is tRNA N6-adenosine threonylcarbamoyltransferase of Mycobacterium avium (strain 104).